The following is a 300-amino-acid chain: Protoheme IX farnesyltransferase 1 (300 aa).

8 helical membrane passes run 28 to 48 (VVALMLLTVLVGMCLAVPGAV), 50 to 70 (VQPLIAGLVGIGMMAGAAAAY), 106 to 126 (AMAILGFALLYWAVNPLTAWL), 150 to 170 (IVVGGLAGAMPPLLGWTAITG), 176 to 196 (ALLLVIIIFAWTPPHFWALAI), 222 to 242 (CIMLYTVLLALACLYPVLVGM), 243 to 263 (CGPLYLVGSTLLSCGFIYKAW), and 280 to 300 (FSIYHLMLLFLLLLVDHYLWS).

The protein belongs to the UbiA prenyltransferase family. Protoheme IX farnesyltransferase subfamily.

The protein localises to the cell inner membrane. It carries out the reaction heme b + (2E,6E)-farnesyl diphosphate + H2O = Fe(II)-heme o + diphosphate. The protein operates within porphyrin-containing compound metabolism; heme O biosynthesis; heme O from protoheme: step 1/1. Functionally, converts heme B (protoheme IX) to heme O by substitution of the vinyl group on carbon 2 of heme B porphyrin ring with a hydroxyethyl farnesyl side group. The polypeptide is Protoheme IX farnesyltransferase 1 (Shewanella loihica (strain ATCC BAA-1088 / PV-4)).